The chain runs to 229 residues: Flagellar L-ring protein (229 aa).

The first 18 residues, 1–18 (MANKWRCSIALAVLSLTG), serve as a signal peptide directing secretion. Cys-19 is lipidated: N-palmitoyl cysteine. The S-diacylglycerol cysteine moiety is linked to residue Cys-19.

It belongs to the FlgH family. The basal body constitutes a major portion of the flagellar organelle and consists of four rings (L,P,S, and M) mounted on a central rod.

Its subcellular location is the cell outer membrane. It localises to the bacterial flagellum basal body. Assembles around the rod to form the L-ring and probably protects the motor/basal body from shearing forces during rotation. This chain is Flagellar L-ring protein (flgH), found in Photorhabdus laumondii subsp. laumondii (strain DSM 15139 / CIP 105565 / TT01) (Photorhabdus luminescens subsp. laumondii).